Reading from the N-terminus, the 362-residue chain is UDP-N-acetylglucosamine--N-acetylmuramyl-(pentapeptide) pyrophosphoryl-undecaprenol N-acetylglucosamine transferase (362 aa).

UDP-N-acetyl-alpha-D-glucosamine contacts are provided by residues 14–16, asparagine 126, arginine 166, serine 193, and glutamine 294; that span reads TGG.

It belongs to the glycosyltransferase 28 family. MurG subfamily.

Its subcellular location is the cell inner membrane. It carries out the reaction di-trans,octa-cis-undecaprenyl diphospho-N-acetyl-alpha-D-muramoyl-L-alanyl-D-glutamyl-meso-2,6-diaminopimeloyl-D-alanyl-D-alanine + UDP-N-acetyl-alpha-D-glucosamine = di-trans,octa-cis-undecaprenyl diphospho-[N-acetyl-alpha-D-glucosaminyl-(1-&gt;4)]-N-acetyl-alpha-D-muramoyl-L-alanyl-D-glutamyl-meso-2,6-diaminopimeloyl-D-alanyl-D-alanine + UDP + H(+). Its pathway is cell wall biogenesis; peptidoglycan biosynthesis. In terms of biological role, cell wall formation. Catalyzes the transfer of a GlcNAc subunit on undecaprenyl-pyrophosphoryl-MurNAc-pentapeptide (lipid intermediate I) to form undecaprenyl-pyrophosphoryl-MurNAc-(pentapeptide)GlcNAc (lipid intermediate II). The protein is UDP-N-acetylglucosamine--N-acetylmuramyl-(pentapeptide) pyrophosphoryl-undecaprenol N-acetylglucosamine transferase of Paracoccus denitrificans (strain Pd 1222).